Reading from the N-terminus, the 373-residue chain is WAT1-related protein At4g30420 (373 aa).

Transmembrane regions (helical) follow at residues 2 to 22 (AMTMIQLCYAGVTLFARATLV), 29 to 49 (VFILYRQAFATIFIFPFLYLS), 55 to 75 (IAISSLDLKSFSLIFLVSLIG), 94 to 114 (MGSAVGNIIPAITFLISFLAG), 125 to 145 (GLAKIAGTILCVAGAISMTLL), 173 to 193 (WLIGCLFLFSSTLCWSFWLIL), 205 to 225 (LSLSAWMCLFGTIQCAVVTFF), 244 to 264 (CLYAGIGASALSFTVQAWAIA), 270 to 290 (FSALFNPLCTVIVTILAALFF), and 294 to 314 (IYTGSLIGGLGVILGLYTVLW). EamA domains are found at residues 9–135 (CYAG…TILC) and 186–313 (CWSF…YTVL).

This sequence belongs to the drug/metabolite transporter (DMT) superfamily. Plant drug/metabolite exporter (P-DME) (TC 2.A.7.4) family.

It localises to the membrane. In Arabidopsis thaliana (Mouse-ear cress), this protein is WAT1-related protein At4g30420.